The primary structure comprises 358 residues: 3-ketosteroid-9-alpha-monooxygenase, ferredoxin reductase component (358 aa).

Positions 12–124 (DHVLELQIAE…LAPSGNFVPT (113 aa)) constitute an FAD-binding FR-type domain. The 90-residue stretch at 269–358 (ATAVVELDGQ…SDSVEVTYDE (90 aa)) folds into the 2Fe-2S ferredoxin-type domain. The [2Fe-2S] cluster site is built by cysteine 305, cysteine 310, cysteine 313, and cysteine 343.

Monomer. The two-component system 3-ketosteroid-9-alpha-monooxygenase is composed of an oxygenase component KshA and a reductase component KshB. The cofactor is FAD. It depends on [2Fe-2S] cluster as a cofactor.

The catalysed reaction is androsta-1,4-diene-3,17-dione + 2 reduced [2Fe-2S]-[ferredoxin] + O2 + 2 H(+) = 9alpha-hydroxyandrosta-1,4-diene-3,17-dione + 2 oxidized [2Fe-2S]-[ferredoxin] + H2O. Its pathway is lipid metabolism; steroid biosynthesis. Involved in the degradation of cholesterol. Catalyzes the introduction of a 9a-hydroxyl moiety into 1,4-androstadiene-3,17-dione (ADD) to yield the 9alpha-hydroxy-1,4-androstadiene-3,17-dione (9OHADD) intermediate which spontaneously form 3-hydroxy-9,10-seconandrost-1,3,5(10)-triene-9,17-dione (HSA) via the meta-cleavage of ring B with concomitant aromatization of ring A. This chain is 3-ketosteroid-9-alpha-monooxygenase, ferredoxin reductase component (hmp), found in Mycobacterium tuberculosis (strain CDC 1551 / Oshkosh).